Consider the following 465-residue polypeptide: ATP-dependent protease ATPase subunit HslU (465 aa).

Residues Val-20, 62–67 (GVGKTE), Asp-277, Glu-343, and Arg-415 each bind ATP.

Belongs to the ClpX chaperone family. HslU subfamily. A double ring-shaped homohexamer of HslV is capped on each side by a ring-shaped HslU homohexamer. The assembly of the HslU/HslV complex is dependent on binding of ATP.

It localises to the cytoplasm. Functionally, ATPase subunit of a proteasome-like degradation complex; this subunit has chaperone activity. The binding of ATP and its subsequent hydrolysis by HslU are essential for unfolding of protein substrates subsequently hydrolyzed by HslV. HslU recognizes the N-terminal part of its protein substrates and unfolds these before they are guided to HslV for hydrolysis. The protein is ATP-dependent protease ATPase subunit HslU of Geobacillus kaustophilus (strain HTA426).